The chain runs to 548 residues: Membrane protein insertase YidC (548 aa).

Residues 6 to 26 (NLLVIALLFVSFMIWQAWEQD) traverse the membrane as a helical segment. Residues 28–56 (NPQPQTQQTTQTTTTAAGSAADQGVPASG) form a disordered region. Over residues 29–42 (PQPQTQQTTQTTTT) the composition is skewed to low complexity. 4 helical membrane-spanning segments follow: residues 350-370 (FVGN…GIMY), 424-444 (FPLI…MGSI), 458-478 (LSAQ…MFFI), and 499-519 (PVIF…YYIV).

It belongs to the OXA1/ALB3/YidC family. Type 1 subfamily. In terms of assembly, interacts with the Sec translocase complex via SecD. Specifically interacts with transmembrane segments of nascent integral membrane proteins during membrane integration.

The protein resides in the cell inner membrane. Functionally, required for the insertion and/or proper folding and/or complex formation of integral membrane proteins into the membrane. Involved in integration of membrane proteins that insert both dependently and independently of the Sec translocase complex, as well as at least some lipoproteins. Aids folding of multispanning membrane proteins. This Salmonella agona (strain SL483) protein is Membrane protein insertase YidC.